A 291-amino-acid polypeptide reads, in one-letter code: MSASKILSQKIKVALVQLSGSSPDKMANLQRAATFIERAMKEQPDTKLVVLPECFNSPYSTDQFRKYSEVINPKEPSTSVQFLSNLANKFKIILVGGTIPELDPKTDKIYNTSIIFNEDGKLIDKHRKVHLFDVDIPNGISFHESETLSPGEKSTTIDTKYGKFGVGICYDMRFPELAMLSARKGAFAMIYPSAFNTVTGPLHWHLLARSRAVDNQVYVMLCSPARNLQSSYHAYGHSIVVDPRGKIVAEAGEGEEIIYAELDPEVIESFRQAVPLTKQRRFDVYSDVNAH.

One can recognise a CN hydrolase domain in the interval 11 to 264 (IKVALVQLSG…EEIIYAELDP (254 aa)). The residue at position 34 (threonine 34) is a Phosphothreonine. The active-site Proton acceptor is the glutamate 53. Lysine 128 (proton donor) is an active-site residue. Cysteine 169 acts as the Nucleophile in catalysis.

It belongs to the carbon-nitrogen hydrolase superfamily. NIT1/NIT2 family. In terms of assembly, homodimer.

It catalyses the reaction a monoamide of a dicarboxylate + H2O = a dicarboxylate + NH4(+). Functionally, possesses omega-amidase activity. The role of omega-amidase is to remove potentially toxic intermediates by converting 2-oxoglutaramate and 2-oxosuccinamate to biologically useful 2-oxoglutarate and oxaloacetate, respectively. In Saccharomyces cerevisiae (strain ATCC 204508 / S288c) (Baker's yeast), this protein is Omega-amidase NIT3 (NIT3).